Here is a 316-residue protein sequence, read N- to C-terminus: Transaldolase (316 aa).

The Schiff-base intermediate with substrate role is filled by K132.

Belongs to the transaldolase family. Type 1 subfamily. Homodimer.

It localises to the cytoplasm. The enzyme catalyses D-sedoheptulose 7-phosphate + D-glyceraldehyde 3-phosphate = D-erythrose 4-phosphate + beta-D-fructose 6-phosphate. It functions in the pathway carbohydrate degradation; pentose phosphate pathway; D-glyceraldehyde 3-phosphate and beta-D-fructose 6-phosphate from D-ribose 5-phosphate and D-xylulose 5-phosphate (non-oxidative stage): step 2/3. Its function is as follows. Transaldolase is important for the balance of metabolites in the pentose-phosphate pathway. The chain is Transaldolase from Vibrio vulnificus (strain CMCP6).